The sequence spans 391 residues: MDQCGTVERELEKVLHKFGGYGQHCERSLEELMEYAGGLRREILQAAEQDGELSGTLSLVLTQCCKRIKDTVQKLASDHKDIHSSVSRVGKAIDKNFDADISSVGIDGCWQNDSQQILSEVMVEHFFRQGMLDVAEELCQEAGLSIDASQKEPFVELNRILEALKVRVLRPALEWAVSNREMLMAQNSSLEFKLHRLYFISLLMGGTVNQREALQYAKNFQPFAENHQKDIQVLMGSLVYLRQGIENSPYVHLLDANQWADICDIFTRDACALLGLSVESPLSVSFSAGCVALPALINIKAVIEQRQCTGVWNQKDELPIEVDLGKKCWYHSIFACPILRQQTTDNNPPMKLVCGHIISRDALNKMFNGSKLKCPYCPMEQSPGDAKQIFF.

One can recognise a LisH domain in the interval 114-146 (SQQILSEVMVEHFFRQGMLDVAEELCQEAGLSI). In terms of domain architecture, CTLH spans 153–210 (PFVELNRILEALKVRVLRPALEWAVSNREMLMAQNSSLEFKLHRLYFISLLMGGTVNQ). The RING-Gid-type zinc finger occupies 336–377 (CPILRQQTTDNNPPMKLVCGHIISRDALNKMFNGSKLKCPYC).

In terms of assembly, identified in the CTLH complex that contains at least RANBP9, MKLN1, MAEA, RMND5A, GID8 and ARMC8.

The protein resides in the nucleus. It localises to the nucleoplasm. Its subcellular location is the cytoplasm. It carries out the reaction S-ubiquitinyl-[E2 ubiquitin-conjugating enzyme]-L-cysteine + [acceptor protein]-L-lysine = [E2 ubiquitin-conjugating enzyme]-L-cysteine + N(6)-ubiquitinyl-[acceptor protein]-L-lysine.. In terms of biological role, E3 ubiquitin-protein ligase component of the CTLH complex. In Xenopus tropicalis (Western clawed frog), this protein is E3 ubiquitin-protein ligase RMND5A (rmnd5a).